Here is a 227-residue protein sequence, read N- to C-terminus: Cytochrome c oxidase subunit 2 (227 aa).

The Mitochondrial intermembrane segment spans residues 1 to 14 (MAYPFELGFQDATS). Residues 15 to 45 (PIMEELLHFHDHTLMIVFLISSLVLYIISLM) traverse the membrane as a helical segment. Over 46 to 59 (LTTKLTHTSTMDAQ) the chain is Mitochondrial matrix. A helical transmembrane segment spans residues 60 to 87 (EVETIWTILPAIILILIALPSLRILYMM). Topologically, residues 88-227 (DEINDPSLTV…HFENWSSSML (140 aa)) are mitochondrial intermembrane. 6 residues coordinate Cu cation: histidine 161, cysteine 196, glutamate 198, cysteine 200, histidine 204, and methionine 207. Glutamate 198 contributes to the Mg(2+) binding site.

The protein belongs to the cytochrome c oxidase subunit 2 family. Component of the cytochrome c oxidase (complex IV, CIV), a multisubunit enzyme composed of 14 subunits. The complex is composed of a catalytic core of 3 subunits MT-CO1, MT-CO2 and MT-CO3, encoded in the mitochondrial DNA, and 11 supernumerary subunits COX4I, COX5A, COX5B, COX6A, COX6B, COX6C, COX7A, COX7B, COX7C, COX8 and NDUFA4, which are encoded in the nuclear genome. The complex exists as a monomer or a dimer and forms supercomplexes (SCs) in the inner mitochondrial membrane with NADH-ubiquinone oxidoreductase (complex I, CI) and ubiquinol-cytochrome c oxidoreductase (cytochrome b-c1 complex, complex III, CIII), resulting in different assemblies (supercomplex SCI(1)III(2)IV(1) and megacomplex MCI(2)III(2)IV(2)). Found in a complex with TMEM177, COA6, COX18, COX20, SCO1 and SCO2. Interacts with TMEM177 in a COX20-dependent manner. Interacts with COX20. Interacts with COX16. Cu cation is required as a cofactor.

It is found in the mitochondrion inner membrane. It catalyses the reaction 4 Fe(II)-[cytochrome c] + O2 + 8 H(+)(in) = 4 Fe(III)-[cytochrome c] + 2 H2O + 4 H(+)(out). Its function is as follows. Component of the cytochrome c oxidase, the last enzyme in the mitochondrial electron transport chain which drives oxidative phosphorylation. The respiratory chain contains 3 multisubunit complexes succinate dehydrogenase (complex II, CII), ubiquinol-cytochrome c oxidoreductase (cytochrome b-c1 complex, complex III, CIII) and cytochrome c oxidase (complex IV, CIV), that cooperate to transfer electrons derived from NADH and succinate to molecular oxygen, creating an electrochemical gradient over the inner membrane that drives transmembrane transport and the ATP synthase. Cytochrome c oxidase is the component of the respiratory chain that catalyzes the reduction of oxygen to water. Electrons originating from reduced cytochrome c in the intermembrane space (IMS) are transferred via the dinuclear copper A center (CU(A)) of subunit 2 and heme A of subunit 1 to the active site in subunit 1, a binuclear center (BNC) formed by heme A3 and copper B (CU(B)). The BNC reduces molecular oxygen to 2 water molecules using 4 electrons from cytochrome c in the IMS and 4 protons from the mitochondrial matrix. The polypeptide is Cytochrome c oxidase subunit 2 (MT-CO2) (Tamias amoenus (Yellow-pine chipmunk)).